The following is a 186-amino-acid chain: Casparian strip membrane protein 5 (186 aa).

Residues Met-1–Ala-23 are Cytoplasmic-facing. Residues Val-24–Ile-44 traverse the membrane as a helical segment. Topologically, residues Ala-45–Thr-73 are extracellular. The N-linked (GlcNAc...) asparagine glycan is linked to Asn-50. The chain crosses the membrane as a helical span at residues Phe-74–Ile-94. The Cytoplasmic segment spans residues Val-95–Arg-106. The chain crosses the membrane as a helical span at residues Leu-107–Ala-127. Over Ala-128–Ser-160 the chain is Extracellular. Residues Leu-161 to Ala-181 traverse the membrane as a helical segment. At Leu-182–His-186 the chain is on the cytoplasmic side.

The protein belongs to the Casparian strip membrane proteins (CASP) family. In terms of assembly, homodimer and heterodimers.

Its subcellular location is the cell membrane. Its function is as follows. Regulates membrane-cell wall junctions and localized cell wall deposition. Required for establishment of the Casparian strip membrane domain (CSD) and the subsequent formation of Casparian strips, a cell wall modification of the root endodermis that determines an apoplastic barrier between the intraorganismal apoplasm and the extraorganismal apoplasm and prevents lateral diffusion. In Oryza sativa subsp. japonica (Rice), this protein is Casparian strip membrane protein 5.